The following is a 681-amino-acid chain: Envelope glycoprotein (681 aa).

Residues 1–18 (MKTTCLLISLILIQGVKT) form the signal peptide. Over 19–648 (LPILEIASNI…GLGGKWWTSD (630 aa)) the chain is Extracellular. Positions 38 to 188 (SGTLQKTEDV…FSRQGQGYRH (151 aa)) are receptor-binding. N-linked (GlcNAc...) asparagine; by host glycans are attached at residues asparagine 94, asparagine 171, asparagine 190, asparagine 202, asparagine 207, asparagine 219, asparagine 223, and asparagine 255. The segment at 222–424 (KNQTCAPSKK…TSPSPTPNST (203 aa)) is disordered. Composition is skewed to polar residues over residues 244–259 (LTSTSTDATKLNTTDP), 278–290 (PYTTSDAATKQGL), and 308–331 (GGNNTNHSQGVVTEPGKTNTTAQP). A mucin-like region region spans residues 277–455 (EPYTTSDAAT…PFLDGLINAP (179 aa)). Residues asparagine 310, asparagine 313, asparagine 326, asparagine 337, asparagine 344, asparagine 345, asparagine 350, asparagine 360, asparagine 397, asparagine 408, asparagine 422, and asparagine 487 are each glycosylated (N-linked (GlcNAc...) asparagine; by host). A compositionally biased stretch (low complexity) spans 337 to 347 (NTTTISTNNTS). The segment covering 348–388 (KHNLSTPSVPIQNATNYNTQSTAPENEQTSAPSKTTLLPTE) has biased composition (polar residues). The segment covering 389-424 (NPTTAKSTNSTKSPTTTVPNTTNKYSTSPSPTPNST) has biased composition (low complexity). The segment at 529 to 549 (GLSWIPFFGPGIEGLYTAGLI) is fusion peptide. 2 N-linked (GlcNAc...) asparagine; by host glycosylation sites follow: asparagine 564 and asparagine 619. Residues 649-669 (WGVLTNLGILLLLSIAVLIAL) traverse the membrane as a helical segment. The Cytoplasmic segment spans residues 670–681 (SCICRIFTKYIG). S-palmitoyl cysteine; by host attachment occurs at residues cysteine 671 and cysteine 673.

The protein belongs to the filoviruses glycoprotein family. Homotrimer; each monomer consists of a GP1 and a GP2 subunit linked by disulfide bonds. The resulting peplomers (GP1,2) protrude from the virus surface as spikes. GP1,2 interacts with human CD209 and CLEC4M (collectively referred to as DC-SIGN(R)). Asialoglycoprotein receptor (ASGP-R) may be a liver-specific receptor for GP1,2. Members of the Tyro3 receptor tyrosine kinase family may be cell entry factors interacting with GP1,2. In terms of processing, N-glycosylated. O-glycosylated in the mucin-like region. Post-translationally, specific enzymatic cleavages in vivo yield mature proteins. The precursor is processed into GP1 and GP2 by host cell furin in the trans Golgi, and maybe by other host proteases, to yield the mature GP1 and GP2 proteins. The cleavage site corresponds to the furin optimal cleavage sequence [KR]-X-[KR]-R. In terms of processing, GP1 is phosphorylated on serine residues between residues 260 and 273.

It is found in the virion membrane. It localises to the host cell membrane. Functionally, GP1 is responsible for binding to the receptor(s) on target cells. Interacts with CD209/DC-SIGN and CLEC4M/DC-SIGNR which act as cofactors for virus entry into the host cell. Binding to CD209 and CLEC4M, which are respectively found on dendritic cells (DCs), and on endothelial cells of liver sinusoids and lymph node sinuses, facilitate infection of macrophages and endothelial cells. These interactions not only facilitate virus cell entry, but also allow capture of viral particles by DCs and subsequent transmission to susceptible cells without DCs infection (trans infection). In terms of biological role, GP2 acts as a class I viral fusion protein. Under the current model, the protein has at least 3 conformational states: pre-fusion native state, pre-hairpin intermediate state, and post-fusion hairpin state. During viral and target cell membrane fusion, the coiled coil regions (heptad repeats) assume a trimer-of-hairpins structure, positioning the fusion peptide in close proximity to the C-terminal region of the ectodomain. The formation of this structure appears to drive apposition and subsequent fusion of viral and target cell membranes. Responsible for penetration of the virus into the cell cytoplasm by mediating the fusion of the membrane of the endocytosed virus particle with the endosomal membrane. Low pH in endosomes induces an irreversible conformational change in GP2, releasing the fusion hydrophobic peptide. The sequence is that of Envelope glycoprotein (GP) from Chlorocebus aethiops (Green monkey).